We begin with the raw amino-acid sequence, 668 residues long: DNA ligase (668 aa).

Residues 34–38, 83–84, and Glu113 each bind NAD(+); these read DAEYD and SL. Lys115 serves as the catalytic N6-AMP-lysine intermediate. 4 residues coordinate NAD(+): Arg136, Glu170, Lys286, and Lys310. Positions 404, 407, 422, and 427 each coordinate Zn(2+). Residues 590-668 form the BRCT domain; it reads ESDSYFAGKT…EVKMLEELKK (79 aa).

The protein belongs to the NAD-dependent DNA ligase family. LigA subfamily. It depends on Mg(2+) as a cofactor. The cofactor is Mn(2+).

The catalysed reaction is NAD(+) + (deoxyribonucleotide)n-3'-hydroxyl + 5'-phospho-(deoxyribonucleotide)m = (deoxyribonucleotide)n+m + AMP + beta-nicotinamide D-nucleotide.. Functionally, DNA ligase that catalyzes the formation of phosphodiester linkages between 5'-phosphoryl and 3'-hydroxyl groups in double-stranded DNA using NAD as a coenzyme and as the energy source for the reaction. It is essential for DNA replication and repair of damaged DNA. The chain is DNA ligase from Bacillus pumilus (strain SAFR-032).